A 689-amino-acid chain; its full sequence is Glycine--tRNA ligase beta subunit (689 aa).

Belongs to the class-II aminoacyl-tRNA synthetase family. As to quaternary structure, tetramer of two alpha and two beta subunits.

The protein localises to the cytoplasm. The enzyme catalyses tRNA(Gly) + glycine + ATP = glycyl-tRNA(Gly) + AMP + diphosphate. The protein is Glycine--tRNA ligase beta subunit of Escherichia coli O139:H28 (strain E24377A / ETEC).